The sequence spans 388 residues: Phosphopentomutase (388 aa).

The Mn(2+) site is built by aspartate 9, aspartate 283, histidine 288, aspartate 324, histidine 325, and histidine 336.

This sequence belongs to the phosphopentomutase family. The cofactor is Mn(2+).

The protein resides in the cytoplasm. It catalyses the reaction 2-deoxy-alpha-D-ribose 1-phosphate = 2-deoxy-D-ribose 5-phosphate. The enzyme catalyses alpha-D-ribose 1-phosphate = D-ribose 5-phosphate. The protein operates within carbohydrate degradation; 2-deoxy-D-ribose 1-phosphate degradation; D-glyceraldehyde 3-phosphate and acetaldehyde from 2-deoxy-alpha-D-ribose 1-phosphate: step 1/2. Its function is as follows. Isomerase that catalyzes the conversion of deoxy-ribose 1-phosphate (dRib-1-P) and ribose 1-phosphate (Rib-1-P) to deoxy-ribose 5-phosphate (dRib-5-P) and ribose 5-phosphate (Rib-5-P), respectively. The polypeptide is Phosphopentomutase (Deinococcus radiodurans (strain ATCC 13939 / DSM 20539 / JCM 16871 / CCUG 27074 / LMG 4051 / NBRC 15346 / NCIMB 9279 / VKM B-1422 / R1)).